A 489-amino-acid chain; its full sequence is Pluviatolide synthase (489 aa).

A helical membrane pass occupies residues 6–26 (SVLAMSSTLILALAMALIFLF). A heme-binding site is contributed by Cys432.

The protein belongs to the cytochrome P450 family. Heme serves as cofactor. As to expression, expressed in leaves, rhizomes and stems.

The protein localises to the membrane. It carries out the reaction (-)-matairesinol + reduced [NADPH--hemoprotein reductase] + O2 = (-)-pluviatolide + oxidized [NADPH--hemoprotein reductase] + 2 H2O + H(+). It functions in the pathway aromatic compound metabolism; phenylpropanoid biosynthesis. Cytochrome P450 involved in the biosynthesis of etoposide, a chemotherapeutic compound of the topoisomerase inhibitor family. Catalyzes the conversion of matairesinol to pluviatolide. The polypeptide is Pluviatolide synthase (Sinopodophyllum hexandrum (Himalayan may apple)).